Consider the following 109-residue polypeptide: MSCLNLHVPKNPVGKYIPLVVLLQMYIIYVEPYYGLHYFESVRQFLGPKILYGTVYFLVICHSIESAIAFLLCLKKGLPFCSSMKWIVSTFIFGGPTLAMLNKQKKHIA.

3 helical membrane passes run 16-36, 54-74, and 80-100; these read YIPL…YYGL, TVYF…LLCL, and FCSS…TLAM.

It is found in the membrane. This is an uncharacterized protein from Schizosaccharomyces pombe (strain 972 / ATCC 24843) (Fission yeast).